A 204-amino-acid chain; its full sequence is Urease accessory protein UreG 1 (204 aa).

GTP is bound at residue 14–21 (GPVGSGKT).

It belongs to the SIMIBI class G3E GTPase family. UreG subfamily. In terms of assembly, homodimer. UreD, UreF and UreG form a complex that acts as a GTP-hydrolysis-dependent molecular chaperone, activating the urease apoprotein by helping to assemble the nickel containing metallocenter of UreC. The UreE protein probably delivers the nickel.

Its subcellular location is the cytoplasm. Facilitates the functional incorporation of the urease nickel metallocenter. This process requires GTP hydrolysis, probably effectuated by UreG. The chain is Urease accessory protein UreG 1 from Methylorubrum populi (strain ATCC BAA-705 / NCIMB 13946 / BJ001) (Methylobacterium populi).